Consider the following 829-residue polypeptide: Telomere length regulation protein TEL2 homolog (829 aa).

Disordered regions lie at residues Ser-446 to Val-493 and Ser-620 to Ile-641. A compositionally biased stretch (low complexity) spans Ser-456–Pro-466. Residues Glu-467 to Gln-480 show a composition bias toward basic and acidic residues. Acidic residues predominate over residues Ser-482 to Val-493. The segment covering Ala-629–Ile-641 has biased composition (polar residues).

This sequence belongs to the TEL2 family.

The protein localises to the cytoplasm. The protein resides in the membrane. It localises to the nucleus. It is found in the chromosome. Its subcellular location is the telomere. Its function is as follows. Regulator of the DNA damage response (DDR). Part of the TTT complex that is required to stabilize protein levels of the phosphatidylinositol 3-kinase-related protein kinase (PIKK) family proteins. Promotes assembly, stabilizes and maintains the activity of TORC complexes, which regulate cell growth and survival in response to nutrient and hormonal signals. May be involved in telomere length regulation. The polypeptide is Telomere length regulation protein TEL2 homolog (telo2) (Xenopus tropicalis (Western clawed frog)).